Reading from the N-terminus, the 138-residue chain is Translation initiation factor 2 subunit beta (138 aa).

It belongs to the eIF-2-beta/eIF-5 family. In terms of assembly, heterotrimer composed of an alpha, a beta and a gamma chain.

Functionally, eIF-2 functions in the early steps of protein synthesis by forming a ternary complex with GTP and initiator tRNA. This Methanococcus maripaludis (strain C6 / ATCC BAA-1332) protein is Translation initiation factor 2 subunit beta.